The following is a 271-amino-acid chain: Type III pantothenate kinase (271 aa).

5-12 (DISNSVTK) contacts ATP. Substrate-binding positions include Y85 and 92 to 95 (GADR). The active-site Proton acceptor is the D94. D114 contributes to the K(+) binding site. T117 contacts ATP. T169 lines the substrate pocket.

It belongs to the type III pantothenate kinase family. In terms of assembly, homodimer. It depends on NH4(+) as a cofactor. K(+) serves as cofactor.

The protein resides in the cytoplasm. It carries out the reaction (R)-pantothenate + ATP = (R)-4'-phosphopantothenate + ADP + H(+). It functions in the pathway cofactor biosynthesis; coenzyme A biosynthesis; CoA from (R)-pantothenate: step 1/5. Its function is as follows. Catalyzes the phosphorylation of pantothenate (Pan), the first step in CoA biosynthesis. This is Type III pantothenate kinase from Methylacidiphilum infernorum (isolate V4) (Methylokorus infernorum (strain V4)).